The primary structure comprises 668 residues: Echinocandin B biosynthetic cluster protein J (668 aa).

Disordered regions lie at residues 1-20 (MHFA…DQSL), 92-113 (YTPP…PPTP), 224-322 (PLDH…QSAD), 330-349 (EVAE…SIPT), and 483-506 (NCSS…PPLK). Polar residues predominate over residues 96-106 (SLDSRSSATPP). A compositionally biased stretch (pro residues) spans 264-275 (NPEPGTPTPPSP). Residues 311 to 322 (YRSTPSPCQSAD) are compositionally biased toward polar residues. The segment covering 484-494 (CSSSSCSSSAS) has biased composition (low complexity). Residues 495 to 505 (KKNEEKREPPL) are compositionally biased toward basic and acidic residues.

Its pathway is antifungal biosynthesis. Its function is as follows. Part of the gene cluster that mediates the biosynthesis of echinocandin B, a fungal lipidated cyclic hexapeptide that acts as an antifungal agent. Linoleoyl-AMP, produced by the fatty-acyl-AMP ligase ecdI, is transferred to the initiation carrier domain (T0) of ecdA. The linoleoyl-S-phosphopantetheinyl-T0 is sequentially extended with L-ornithine, L-threonine, L-proline, L-homotyrosine, L-threonine, and 4R-methyl-L-proline to form the linear hexapeptide. Thereafter, the terminal condensation (C7) performs macrocyclization of the NRPS product and the cyclic scaffold is released from ecdA. All six of the amino acid residues are hydroxylated, including 4R,5R-dihydroxy-L-ornithine, 4R-hydroxyl-L-proline, 3S,4S-dihydroxy-L-homotyrosine, and 3S-hydroxyl-4S-methyl-L-prolin. In the pathway, all the hydroxylation reactions are proposed to occur following completion of the cyclic peptide, so the unhydroxylated precursor produced by ecdA will undergo six rounds of hydroxylation. Five hydroxylase genes (ecdG, ecdH, ecdK, htyE and htyF) are embedded within the echinocandin B (ecd) and L-homotyrosine (hty) clusters. The protein is Echinocandin B biosynthetic cluster protein J of Aspergillus rugulosus (Emericella rugulosa).